The sequence spans 554 residues: CTP synthase (554 aa).

An amidoligase domain region spans residues 1-270 (MTKFVFVTGG…DGLICDKLRL (270 aa)). Ser-13 provides a ligand contact to CTP. Ser-13 contacts UTP. ATP-binding positions include 14–19 (SLGKGI) and Asp-71. Residues Asp-71 and Glu-144 each contribute to the Mg(2+) site. CTP contacts are provided by residues 151 to 153 (DIE), 191 to 196 (KTKPTQ), and Lys-227. UTP-binding positions include 191–196 (KTKPTQ) and Lys-227. The Glutamine amidotransferase type-1 domain occupies 295–548 (TVAMVGKYVD…IAAAKARHQA (254 aa)). Gly-357 is a binding site for L-glutamine. Cys-384 serves as the catalytic Nucleophile; for glutamine hydrolysis. L-glutamine is bound by residues 385–388 (LGMQ), Glu-408, and Arg-474. Residues His-521 and Glu-523 contribute to the active site.

It belongs to the CTP synthase family. In terms of assembly, homotetramer.

The catalysed reaction is UTP + L-glutamine + ATP + H2O = CTP + L-glutamate + ADP + phosphate + 2 H(+). It catalyses the reaction L-glutamine + H2O = L-glutamate + NH4(+). The enzyme catalyses UTP + NH4(+) + ATP = CTP + ADP + phosphate + 2 H(+). It functions in the pathway pyrimidine metabolism; CTP biosynthesis via de novo pathway; CTP from UDP: step 2/2. Allosterically activated by GTP, when glutamine is the substrate; GTP has no effect on the reaction when ammonia is the substrate. The allosteric effector GTP functions by stabilizing the protein conformation that binds the tetrahedral intermediate(s) formed during glutamine hydrolysis. Inhibited by the product CTP, via allosteric rather than competitive inhibition. Its function is as follows. Catalyzes the ATP-dependent amination of UTP to CTP with either L-glutamine or ammonia as the source of nitrogen. Regulates intracellular CTP levels through interactions with the four ribonucleotide triphosphates. The chain is CTP synthase from Verminephrobacter eiseniae (strain EF01-2).